A 476-amino-acid polypeptide reads, in one-letter code: Glutamate--tRNA ligase (476 aa).

Residues 9-19 (PSPTGLFHIGT) carry the 'HIGH' region motif. Positions 248–252 (KLSKR) match the 'KMSKS' region motif. K251 provides a ligand contact to ATP.

It belongs to the class-I aminoacyl-tRNA synthetase family. Glutamate--tRNA ligase type 1 subfamily. Monomer.

Its subcellular location is the cytoplasm. It carries out the reaction tRNA(Glu) + L-glutamate + ATP = L-glutamyl-tRNA(Glu) + AMP + diphosphate. Catalyzes the attachment of glutamate to tRNA(Glu) in a two-step reaction: glutamate is first activated by ATP to form Glu-AMP and then transferred to the acceptor end of tRNA(Glu). In Prochlorococcus marinus (strain MIT 9301), this protein is Glutamate--tRNA ligase.